The following is a 93-amino-acid chain: YcgL domain-containing protein swp_2294 (93 aa).

One can recognise a YcgL domain in the interval 1 to 85 (MICAVYKSLR…PVVNLLEQHK (85 aa)).

The sequence is that of YcgL domain-containing protein swp_2294 from Shewanella piezotolerans (strain WP3 / JCM 13877).